A 109-amino-acid chain; its full sequence is Spermidine export protein MdtI (109 aa).

4 helical membrane passes run 6 to 26 (WVHAAWLALAIVLEIVANVFL), 36 to 56 (IFGLLSLAAVLAAFSALSQAV), 64 to 84 (AYALWGGFGIAATLAAGWILF), and 88 to 108 (LNRKGWIGLVLLLAGMIMVKL).

This sequence belongs to the drug/metabolite transporter (DMT) superfamily. Small multidrug resistance (SMR) (TC 2.A.7.1) family. MdtI subfamily. Forms a complex with MdtJ.

The protein resides in the cell inner membrane. Functionally, catalyzes the excretion of spermidine. The polypeptide is Spermidine export protein MdtI (Escherichia coli O81 (strain ED1a)).